The primary structure comprises 504 residues: Arabinose import ATP-binding protein AraG (504 aa).

2 consecutive ABC transporter domains span residues Leu8 to Arg243 and Tyr256 to Val499. Gly40–Ser47 provides a ligand contact to ATP.

This sequence belongs to the ABC transporter superfamily. Arabinose importer (TC 3.A.1.2.2) family. In terms of assembly, the complex is composed of two ATP-binding proteins (AraG), two transmembrane proteins (AraH) and a solute-binding protein (AraF).

It is found in the cell inner membrane. The enzyme catalyses L-arabinose(out) + ATP + H2O = L-arabinose(in) + ADP + phosphate + H(+). In terms of biological role, part of the ABC transporter complex AraFGH involved in arabinose import. Responsible for energy coupling to the transport system. The protein is Arabinose import ATP-binding protein AraG of Escherichia coli O6:K15:H31 (strain 536 / UPEC).